Consider the following 171-residue polypeptide: MKKLSGVLAGSLLLISASFSQDLKAHAELINTEGEVIGKAELIETNSGVLIKLNAKGLPPNAELAFHIHERGECKPPTFKSAKGHFNPYGKKHGLLNPEGPHAGDMPNIYTDDKGNVRVQVLNPFVTLKKGEKNSLFKEGGTALVIHSGPDDYKSDPAGNAGKRIACGVIR.

An N-terminal signal peptide occupies residues 1–20 (MKKLSGVLAGSLLLISASFS). 3 residues coordinate Cu cation: H67, H69, and H85. C74 and C167 are oxidised to a cystine. H85, H93, H102, and D105 together coordinate Zn(2+). H147 provides a ligand contact to Cu cation.

Belongs to the Cu-Zn superoxide dismutase family. The cofactor is Cu cation. Zn(2+) is required as a cofactor.

The catalysed reaction is 2 superoxide + 2 H(+) = H2O2 + O2. In terms of biological role, destroys radicals which are normally produced within the cells and which are toxic to biological systems. The protein is Superoxide dismutase [Cu-Zn] 2 (sodC2) of Aquifex aeolicus (strain VF5).